The chain runs to 898 residues: Transportin-1 (898 aa).

M1 is subject to N-acetylmethionine. HEAT repeat units follow at residues 19–46 (GLQQ…QKLE), 51–89 (YPDF…AHFQ), 98–131 (FIKS…KGEL), 137–174 (LLPK…LDSD), 181–211 (NIMI…QFII), 224–251 (FIEN…VMLL), 263–290 (HNIV…FWLT), 306–397 (PKLI…LANV), 405–433 (HILP…GAIA), 445–472 (PELI…TLSR), 486–519 (LKPL…EEEA), 527–560 (LAYI…ADSV), 568–606 (EYIQ…TALQ), 614–665 (EPVY…GLGG), 676–707 (ILTL…KACF), 715–748 (ADFM…IQMG), 756–791 (PMVL…YVCP), 799–832 (QQFI…ISVN), 841–872 (IFFC…KNQV), and 875–895 (ENWR…LAAF). The Importin N-terminal domain maps to 41–109 (VQQKLEQLNQ…KSECLNNIGD (69 aa)). The interval 347 to 374 (FHRSRTVAQQHDEDGIEEEDDDDDEIDD) is disordered. Residues 360–374 (DGIEEEDDDDDEIDD) show a composition bias toward acidic residues.

It belongs to the importin beta family. Importin beta-2 subfamily. As to quaternary structure, identified in a complex that contains TNPO1, RAN and RANBP1. Binds HNRPA1, HNRPA2, HNRNPDL, RPS7, RPL5 and RAN. Interacts with H2A, H2B, H3 and H4 histones. Interacts with isoform 1 and isoform 5 of ADAR/ADAR1 (via DRBM 3 domain). Interacts with SNAI1 (via zinc fingers); the interaction mediates SNAI1 nuclear import. Interacts with SNAI2 (via zinc fingers). Interacts with RPL23A (via BIB domain) and SRP19; this interaction is involved in RPL23A and SRP19 import into the nucleus. Interacts (via HEAT repeats 8-12) with BAP1 (via non-classical PY-NLS); this interaction is direct, is involved in BAP1 nuclear import and disrupts BAP1 homodimerization. In terms of assembly, (Microbial infection) Binds to HIV-1 Rev.

It is found in the cytoplasm. The protein localises to the nucleus. Its function is as follows. Functions in nuclear protein import as nuclear transport receptor. Serves as receptor for nuclear localization signals (NLS) in cargo substrates. May mediate docking of the importin/substrate complex to the nuclear pore complex (NPC) through binding to nucleoporin and the complex is subsequently translocated through the pore by an energy requiring, Ran-dependent mechanism. At the nucleoplasmic side of the NPC, Ran binds to the importin, the importin/substrate complex dissociates and importin is re-exported from the nucleus to the cytoplasm where GTP hydrolysis releases Ran. The directionality of nuclear import is thought to be conferred by an asymmetric distribution of the GTP- and GDP-bound forms of Ran between the cytoplasm and nucleus. Involved in nuclear import of M9-containing proteins. In vitro, binds directly to the M9 region of the heterogeneous nuclear ribonucleoproteins (hnRNP), A1 and A2 and mediates their nuclear import. Involved in hnRNP A1/A2 nuclear export. Mediates the nuclear import of ribosomal proteins RPL23A, RPS7 and RPL5. In vitro, mediates nuclear import of H2A, H2B, H3 and H4 histones. In vitro, mediates nuclear import of SRP19. Mediates nuclear import of ADAR/ADAR1 isoform 1 and isoform 5 in a RanGTP-dependent manner. Main mediator of PR-DUB complex component BAP1 nuclear import; acts redundantly with the karyopherins KPNA1 and KPNA2. In terms of biological role, (Microbial infection) In case of HIV-1 infection, binds and mediates the nuclear import of HIV-1 Rev. The protein is Transportin-1 (TNPO1) of Homo sapiens (Human).